Here is a 514-residue protein sequence, read N- to C-terminus: Extracellular exo-inulinase inuE (514 aa).

Positions 1-18 (MRAFLALIFLTFVMNVES) are cleaved as a signal peptide. Substrate is bound by residues 33–34 (ND) and Q52. The Nucleophile role is filled by D34. N56 carries an N-linked (GlcNAc...) asparagine glycan. Residues W60 and S95 each contribute to the substrate site. Residues N104 and N110 are each glycosylated (N-linked (GlcNAc...) asparagine). 162–163 (RD) contacts substrate. 2 N-linked (GlcNAc...) asparagine glycosylation sites follow: N197 and N203. E214 and W300 together coordinate substrate. The active-site Proton donor/acceptor is the E214. 4 N-linked (GlcNAc...) asparagine glycosylation sites follow: N357, N371, N389, and N422.

The protein belongs to the glycosyl hydrolase 32 family.

Its subcellular location is the secreted. It carries out the reaction Hydrolysis of terminal, non-reducing (2-&gt;1)- and (2-&gt;6)-linked beta-D-fructofuranose residues in fructans.. Exo-inulinase involved in utilization of the plant storage polymer inulin, consisting of fructooligosaccharides with a degree of polymerization (DP) value from 2 to 60. Splits off terminal fructose units successively from the non-reducing end of the inulin molecule. The chain is Extracellular exo-inulinase inuE from Meyerozyma guilliermondii (Yeast).